Here is a 288-residue protein sequence, read N- to C-terminus: ATP synthase gamma chain (288 aa).

This sequence belongs to the ATPase gamma chain family. F-type ATPases have 2 components, CF(1) - the catalytic core - and CF(0) - the membrane proton channel. CF(1) has five subunits: alpha(3), beta(3), gamma(1), delta(1), epsilon(1). CF(0) has three main subunits: a, b and c.

It localises to the cell membrane. In terms of biological role, produces ATP from ADP in the presence of a proton gradient across the membrane. The gamma chain is believed to be important in regulating ATPase activity and the flow of protons through the CF(0) complex. This Shouchella clausii (strain KSM-K16) (Alkalihalobacillus clausii) protein is ATP synthase gamma chain.